Consider the following 475-residue polypeptide: NADH-quinone oxidoreductase subunit N (475 aa).

Transmembrane regions (helical) follow at residues 7–27 (ISIA…VLLG), 40–60 (LLGA…SAVD), 74–94 (FIAI…LVAG), 105–125 (FEYT…LSAN), 127–147 (LMTL…LAAF), 161–181 (YFVL…LVYG), 191–211 (IAAA…LMAL), 242–262 (APKL…FGVY), 266–286 (WMLI…FGGL), 295–315 (LAYS…AGEV), 321–341 (VLTY…IVLA), 365–385 (LAVA…MAGF), 399–419 (ELYW…GYYL), and 448–468 (GATI…TGII).

Belongs to the complex I subunit 2 family. As to quaternary structure, NDH-1 is composed of 14 different subunits. Subunits NuoA, H, J, K, L, M, N constitute the membrane sector of the complex.

Its subcellular location is the cell inner membrane. It carries out the reaction a quinone + NADH + 5 H(+)(in) = a quinol + NAD(+) + 4 H(+)(out). Functionally, NDH-1 shuttles electrons from NADH, via FMN and iron-sulfur (Fe-S) centers, to quinones in the respiratory chain. The immediate electron acceptor for the enzyme in this species is believed to be ubiquinone. Couples the redox reaction to proton translocation (for every two electrons transferred, four hydrogen ions are translocated across the cytoplasmic membrane), and thus conserves the redox energy in a proton gradient. The protein is NADH-quinone oxidoreductase subunit N of Hirschia baltica (strain ATCC 49814 / DSM 5838 / IFAM 1418).